Reading from the N-terminus, the 94-residue chain is Large ribosomal subunit protein uL23c (94 aa).

It belongs to the universal ribosomal protein uL23 family. In terms of assembly, part of the 50S ribosomal subunit.

It is found in the plastid. The protein resides in the chloroplast. Its function is as follows. Binds to 23S rRNA. The chain is Large ribosomal subunit protein uL23c (rpl23) from Tupiella akineta (Green alga).